The primary structure comprises 461 residues: Autophagy-related protein 6 (461 aa).

Residues 75-88 (EEHGTDSSPDHDSS) show a composition bias toward basic and acidic residues. Disordered regions lie at residues 75–94 (EEHG…ASLV) and 101–124 (EEPV…PISG). Residues 103–113 (PVPVSAPSPES) show a composition bias toward low complexity. Residues 194 to 286 (TKLRDSIQEC…VLNRLDHLRN (93 aa)) adopt a coiled-coil conformation.

This sequence belongs to the beclin family.

Required for cytoplasm to vacuole transport (Cvt) and autophagy. Also involved in endosome-to-Golgi retrograde transport. In Meyerozyma guilliermondii (strain ATCC 6260 / CBS 566 / DSM 6381 / JCM 1539 / NBRC 10279 / NRRL Y-324) (Yeast), this protein is Autophagy-related protein 6 (ATG6).